A 760-amino-acid chain; its full sequence is Amyloid beta precursor protein binding family B member 2 (760 aa).

Phosphoserine is present on residues S123 and S160. 2 disordered regions span residues 177–295 (QNLG…LPPG) and 324–351 (PADL…KQPW). Composition is skewed to polar residues over residues 212 to 230 (NKPQ…SSSP) and 261 to 275 (SWTT…PSSP). A WW domain is found at 290–322 (PDLPPGWKRVNDIAGTYYWHIPTGTTQWERPVS). 3 positions are modified to phosphoserine: S334, S409, and S412. PID domains are found at residues 413 to 580 (DPEA…LQVD) and 586 to 738 (TELV…VTTN).

Interacts (via C-terminus) with APP (via C-terminus). Interacts with APLP2 (via cytoplasmic domain). In terms of tissue distribution, expressed in the brain, retinal lens and muscle cells (at protein level).

It is found in the endoplasmic reticulum. The protein resides in the golgi apparatus. The protein localises to the early endosome. Plays a role in the maintenance of lens transparency, and may also play a role in muscle cell strength. Involved in hippocampal neurite branching and neuromuscular junction formation, as a result plays a role in spatial memory functioning. Activates transcription of APP. The sequence is that of Amyloid beta precursor protein binding family B member 2 from Mus musculus (Mouse).